A 209-amino-acid polypeptide reads, in one-letter code: Hyperpolarization-activated voltage-gated potassium channel (209 aa).

Residues 1-10 lie on the Cytoplasmic side of the membrane; the sequence is MNLKDRRLKK. Residues 11 to 31 traverse the membrane as a helical segment; it reads IMEVLSLIFTFEIVASFILST. The Extracellular segment spans residues 32 to 38; sequence YNPPYQD. Residues 39-59 traverse the membrane as a helical segment; it reads LLIKLDYISIMFFTFEFIYNF. The Cytoplasmic portion of the chain corresponds to 60 to 71; it reads YYVEDKAKFFKD. Residues 72-92 form a helical membrane-spanning segment; sequence IYNIVDAIVVIAFLLYSLQVF. The Extracellular portion of the chain corresponds to 93-96; it reads YSKA. The chain crosses the membrane as a helical; Voltage-sensor span at residues 97–117; sequence FLGLRVINLLRILVLLRIIKL. The Cytoplasmic portion of the chain corresponds to 118-125; the sequence is RKLEENQA. The helical transmembrane segment at 126 to 146 threads the bilayer; sequence LINFLTLLTICFIASCLIWIV. At 147-181 the chain is on the extracellular side; that stretch reads ESGVNPAINNFFDAFYFTTISITTVGYGDITPKTD. Positions 170 to 175 match the Selectivity filter motif; the sequence is TVGYGD. The chain crosses the membrane as a helical span at residues 182 to 202; that stretch reads AGKLIIIFSVLFFISGLITSL. The Cytoplasmic segment spans residues 203–209; it reads QKALKGD.

It belongs to the potassium channel family. As to quaternary structure, homotetramer.

It is found in the cell membrane. In terms of biological role, voltage-gated potassium-selective channel opened by hyperpolarization. In Methanocaldococcus jannaschii (strain ATCC 43067 / DSM 2661 / JAL-1 / JCM 10045 / NBRC 100440) (Methanococcus jannaschii), this protein is Hyperpolarization-activated voltage-gated potassium channel (mvp).